Reading from the N-terminus, the 102-residue chain is Integration host factor subunit alpha (102 aa).

The protein belongs to the bacterial histone-like protein family. As to quaternary structure, heterodimer of an alpha and a beta chain.

This protein is one of the two subunits of integration host factor, a specific DNA-binding protein that functions in genetic recombination as well as in transcriptional and translational control. The polypeptide is Integration host factor subunit alpha (Paracoccus denitrificans (strain Pd 1222)).